A 273-amino-acid chain; its full sequence is 4-hydroxy-tetrahydrodipicolinate reductase (273 aa).

Residues 11-16 (GAGGRM) and glutamate 36 each bind NAD(+). Arginine 37 contributes to the NADP(+) binding site. NAD(+)-binding positions include 100–102 (GTT) and 124–127 (AANY). Histidine 157 (proton donor/acceptor) is an active-site residue. Histidine 158 provides a ligand contact to (S)-2,3,4,5-tetrahydrodipicolinate. Lysine 161 (proton donor) is an active-site residue. 167-168 (GT) serves as a coordination point for (S)-2,3,4,5-tetrahydrodipicolinate.

The protein belongs to the DapB family.

The protein localises to the cytoplasm. The enzyme catalyses (S)-2,3,4,5-tetrahydrodipicolinate + NAD(+) + H2O = (2S,4S)-4-hydroxy-2,3,4,5-tetrahydrodipicolinate + NADH + H(+). The catalysed reaction is (S)-2,3,4,5-tetrahydrodipicolinate + NADP(+) + H2O = (2S,4S)-4-hydroxy-2,3,4,5-tetrahydrodipicolinate + NADPH + H(+). Its pathway is amino-acid biosynthesis; L-lysine biosynthesis via DAP pathway; (S)-tetrahydrodipicolinate from L-aspartate: step 4/4. In terms of biological role, catalyzes the conversion of 4-hydroxy-tetrahydrodipicolinate (HTPA) to tetrahydrodipicolinate. The sequence is that of 4-hydroxy-tetrahydrodipicolinate reductase from Acinetobacter baumannii (strain ACICU).